Here is a 71-residue protein sequence, read N- to C-terminus: NAD(P)H-quinone oxidoreductase subunit O (71 aa).

Belongs to the complex I NdhO subunit family. As to quaternary structure, NDH-1 can be composed of about 15 different subunits; different subcomplexes with different compositions have been identified which probably have different functions.

The protein localises to the cellular thylakoid membrane. It carries out the reaction a plastoquinone + NADH + (n+1) H(+)(in) = a plastoquinol + NAD(+) + n H(+)(out). The enzyme catalyses a plastoquinone + NADPH + (n+1) H(+)(in) = a plastoquinol + NADP(+) + n H(+)(out). In terms of biological role, NDH-1 shuttles electrons from an unknown electron donor, via FMN and iron-sulfur (Fe-S) centers, to quinones in the respiratory and/or the photosynthetic chain. The immediate electron acceptor for the enzyme in this species is believed to be plastoquinone. Couples the redox reaction to proton translocation, and thus conserves the redox energy in a proton gradient. Cyanobacterial NDH-1 also plays a role in inorganic carbon-concentration. In Nostoc punctiforme (strain ATCC 29133 / PCC 73102), this protein is NAD(P)H-quinone oxidoreductase subunit O.